The sequence spans 108 residues: Long neurotoxin 43 (108 aa).

The N-terminal stretch at 1–21 (MKTLLLTLVVVTIVCLDLAYT) is a signal peptide. 5 cysteine pairs are disulfide-bonded: cysteine 24–cysteine 42, cysteine 35–cysteine 63, cysteine 48–cysteine 52, cysteine 67–cysteine 78, and cysteine 79–cysteine 84.

Belongs to the three-finger toxin family. Long-chain subfamily. Type II alpha-neurotoxin sub-subfamily. Expressed by the venom gland.

The protein localises to the secreted. In terms of biological role, binds with high affinity to muscular (alpha-1/CHRNA1) and neuronal (alpha-7/CHRNA7) nicotinic acetylcholine receptor (nAChR) and inhibits acetylcholine from binding to the receptor, thereby impairing neuromuscular and neuronal transmission. The protein is Long neurotoxin 43 of Drysdalia coronoides (White-lipped snake).